Here is a 268-residue protein sequence, read N- to C-terminus: MKFAVIGNPISHSLSPVMHRANFNSLGLDDTYEALNIPIEDFHLIKEIISKKELDGFNITIPHKERIIPYLDYVDEQAINAGAVNTVLIKDGKWIGYNTDGIGYVKGLHSVYPDLENAYILILGAGGASKGIAYELAKFVKPKLTVANRTMARFESWNLNINQISLADAEKYLAEFDIVINTTPAGMAGNNESIINLKHLSPNTLMSDIVYIPYKTPILEEAERKGNHIYNGLDMFVYQGAESFKIWTNKDADINSMKTAVLQQLKGE.

Residues 13–15 (SLS) and Thr60 contribute to the shikimate site. The active-site Proton acceptor is the Lys64. Residue Glu76 coordinates NADP(+). Asn85 and Asp100 together coordinate shikimate. Residues 124–128 (GAGGA), 148–153 (NRTMAR), and Ile209 contribute to the NADP(+) site. Residue Tyr211 participates in shikimate binding. Gly232 contacts NADP(+).

It belongs to the shikimate dehydrogenase family. Homodimer.

It catalyses the reaction shikimate + NADP(+) = 3-dehydroshikimate + NADPH + H(+). The protein operates within metabolic intermediate biosynthesis; chorismate biosynthesis; chorismate from D-erythrose 4-phosphate and phosphoenolpyruvate: step 4/7. Functionally, involved in the biosynthesis of the chorismate, which leads to the biosynthesis of aromatic amino acids. Catalyzes the reversible NADPH linked reduction of 3-dehydroshikimate (DHSA) to yield shikimate (SA). The protein is Shikimate dehydrogenase (NADP(+)) of Staphylococcus aureus (strain JH1).